A 92-amino-acid chain; its full sequence is Small ribosomal subunit protein uS19 (92 aa).

Residues 1 to 27 are disordered; that stretch reads MARSIKKGPFADDHLKKKVEAQSGSEK. Residues 9 to 27 are compositionally biased toward basic and acidic residues; the sequence is PFADDHLKKKVEAQSGSEK.

The protein belongs to the universal ribosomal protein uS19 family.

In terms of biological role, protein S19 forms a complex with S13 that binds strongly to the 16S ribosomal RNA. The protein is Small ribosomal subunit protein uS19 of Staphylococcus saprophyticus subsp. saprophyticus (strain ATCC 15305 / DSM 20229 / NCIMB 8711 / NCTC 7292 / S-41).